The primary structure comprises 142 residues: Cellulose/chitin binding protein BQ2027_MB2009 (142 aa).

An N-terminal signal peptide occupies residues 1-37 (MAGLNIYVRRWRTALHATVSALIVAILGLAITPVASA). Residues 38–142 (ATARATLSVT…CLLNGQYPCT (105 aa)) form the CBM2 domain.

Its subcellular location is the secreted. It localises to the cell wall. The protein localises to the cell membrane. In terms of biological role, carbohydrate binding protein that binds chitin and cellulose. Lacks enzymatic activity and does not hydrolyze chitin and cellulose. May interact with mycobacterial biofilms, which are rich in cellulose, and play a role in biofilm formation. Could also act as an adhesin, improving the initial attachment to host cells and aiding M.bovis during the initial stages of infection. Its function is as follows. May act as a virulence factor that modulates host immune responses and contributes to host immune evasion. In Mycobacterium bovis (strain ATCC BAA-935 / AF2122/97), this protein is Cellulose/chitin binding protein BQ2027_MB2009.